Here is a 730-residue protein sequence, read N- to C-terminus: Catalase-peroxidase (730 aa).

The tract at residues 1–25 is disordered; that stretch reads MEEKKCPVTGHTQHTPTGGGTKNKD. The tryptophyl-tyrosyl-methioninium (Trp-Tyr) (with M-244) cross-link spans 95-218; it reads WHSAGTYRLN…LAAVQMGLIY (124 aa). His96 acts as the Proton acceptor in catalysis. A cross-link (tryptophyl-tyrosyl-methioninium (Tyr-Met) (with W-95)) is located at residues 218 to 244; it reads YVNPEGPNGQPSVLASGRDVRDTFKRM. Residue His259 participates in heme b binding.

This sequence belongs to the peroxidase family. Peroxidase/catalase subfamily. In terms of assembly, homodimer or homotetramer. Requires heme b as cofactor. In terms of processing, formation of the three residue Trp-Tyr-Met cross-link is important for the catalase, but not the peroxidase activity of the enzyme.

The catalysed reaction is H2O2 + AH2 = A + 2 H2O. The enzyme catalyses 2 H2O2 = O2 + 2 H2O. Its function is as follows. Bifunctional enzyme with both catalase and broad-spectrum peroxidase activity. The polypeptide is Catalase-peroxidase (Desulfitobacterium hafniense (strain Y51)).